Consider the following 240-residue polypeptide: Enoyl-CoA delta isomerase 2, peroxisomal (240 aa).

The Microbody targeting signal motif lies at 238–240 (PKL).

The protein belongs to the enoyl-CoA hydratase/isomerase family.

It is found in the peroxisome. It catalyses the reaction a (3Z)-enoyl-CoA = a 4-saturated (2E)-enoyl-CoA. The enzyme catalyses a (3E)-enoyl-CoA = a 4-saturated (2E)-enoyl-CoA. The protein operates within lipid metabolism; fatty acid beta-oxidation. Functionally, able to isomerize both 3-cis and 3-trans double bonds into the 2-trans form in a range of enoyl-CoA species. Essential for the beta oxidation of unsaturated fatty acids. Involved with IBR1 and IBR3 in the peroxisomal beta-oxidation of indole-3-butyric acid (IBA) to form indole-3-acetic acid (IAA), a biologically active auxin. The protein is Enoyl-CoA delta isomerase 2, peroxisomal of Arabidopsis thaliana (Mouse-ear cress).